The sequence spans 1857 residues: Chitin synthase Y (1857 aa).

A disordered region spans residues M1–P22. A Myosin motor domain is found at M1–E788. Residue G102–T109 participates in ATP binding. Positions S601 to S653 are disordered. N634 carries N-linked (GlcNAc...) asparagine glycosylation. Positions L668–D692 are actin-binding. Transmembrane regions (helical) follow at residues W898 to G918 and L937 to V957. The 60-residue stretch at Q961–F1020 folds into the Cytochrome b5 heme-binding domain. Residues N1047 and N1072 are each glycosylated (N-linked (GlcNAc...) asparagine). Residues F1209–L1229 form a helical membrane-spanning segment. N1572 is a glycosylation site (N-linked (GlcNAc...) asparagine). A run of 3 helical transmembrane segments spans residues L1603–L1623, I1630–I1650, and M1657–F1677. The DEK-C domain occupies L1799–S1854.

The protein in the N-terminal section; belongs to the TRAFAC class myosin-kinesin ATPase superfamily. Myosin family. This sequence in the C-terminal section; belongs to the chitin synthase family. Class V subfamily.

The protein localises to the cell membrane. Its subcellular location is the cell septum. It is found in the cell tip. The enzyme catalyses [(1-&gt;4)-N-acetyl-beta-D-glucosaminyl](n) + UDP-N-acetyl-alpha-D-glucosamine = [(1-&gt;4)-N-acetyl-beta-D-glucosaminyl](n+1) + UDP + H(+). Its function is as follows. Polymerizes chitin, a structural polymer of the cell wall and septum, by transferring the sugar moiety of UDP-GlcNAc to the non-reducing end of the growing chitin polymer. Specifically involved in hyphal elongation and new cell wall formation. This is Chitin synthase Y from Aspergillus oryzae (strain ATCC 42149 / RIB 40) (Yellow koji mold).